We begin with the raw amino-acid sequence, 284 residues long: Ribosomal RNA small subunit methyltransferase A (284 aa).

S-adenosyl-L-methionine contacts are provided by Asn-33, Leu-35, Gly-60, Glu-81, Asp-101, and Asn-124.

The protein belongs to the class I-like SAM-binding methyltransferase superfamily. rRNA adenine N(6)-methyltransferase family. RsmA subfamily.

It localises to the cytoplasm. It carries out the reaction adenosine(1518)/adenosine(1519) in 16S rRNA + 4 S-adenosyl-L-methionine = N(6)-dimethyladenosine(1518)/N(6)-dimethyladenosine(1519) in 16S rRNA + 4 S-adenosyl-L-homocysteine + 4 H(+). In terms of biological role, specifically dimethylates two adjacent adenosines (A1518 and A1519) in the loop of a conserved hairpin near the 3'-end of 16S rRNA in the 30S particle. May play a critical role in biogenesis of 30S subunits. The sequence is that of Ribosomal RNA small subunit methyltransferase A from Chlamydia felis (strain Fe/C-56) (Chlamydophila felis).